We begin with the raw amino-acid sequence, 491 residues long: Probable G-protein coupled receptor Mth-like 7 (491 aa).

An N-terminal signal peptide occupies residues 1 to 22 (MRLPWVIFCTVLLLIFTNNSNA). N-linked (GlcNAc...) asparagine glycosylation is found at asparagine 18 and asparagine 42. Over 23 to 167 (DIPGCNYYDT…EEVSIQIFNK (145 aa)) the chain is Extracellular. 3 cysteine pairs are disulfide-bonded: cysteine 27/cysteine 80, cysteine 82/cysteine 87, and cysteine 92/cysteine 103. Residues 168–188 (CGLIVWFQDGKFWVTVDLFME) traverse the membrane as a helical segment. At 189-222 (KQDYCLYRHNFDSDFPKSMWIIRHRCTSHISPGS) the chain is on the cytoplasmic side. A helical membrane pass occupies residues 223 to 243 (LEILIITMICFVLTIAVYLYI). The Extracellular segment spans residues 244–252 (KKLRNVTGK). The N-linked (GlcNAc...) asparagine glycan is linked to asparagine 248. The chain crosses the membrane as a helical span at residues 253–273 (CIVCCIVSRFIQCLIMILDHL). At 274–325 (NLLNGICSPAGYSSHFFRMASNLWLSVISYHTWKVLTSLNRVDPNYRFLRYN) the chain is on the cytoplasmic side. A helical transmembrane segment spans residues 326–346 (AFVWSTAAIMTGSIYIVNQIW). Over 347-372 (ENDPSKWNWLPLVGFIRCSVKDWHPS) the chain is Extracellular. A helical transmembrane segment spans residues 373 to 393 (VWIYISGPSLALSTFNVAMFA). Topologically, residues 394–434 (LTAIYIRKVKGGINKFTNEEEGRINCINFDSQTYLQFLRLS) are cytoplasmic. Residues 435-455 (IVMGLTWIFNVIPYSARLHIF) traverse the membrane as a helical segment. The Extracellular portion of the chain corresponds to 456–458 (WEW). A helical membrane pass occupies residues 459-479 (VGIISEYFHSAFGIVLFVLLV). Residues 480–491 (LKRSTWTLMMDS) lie on the Cytoplasmic side of the membrane.

It belongs to the G-protein coupled receptor 2 family. Mth subfamily.

It is found in the cell membrane. The polypeptide is Probable G-protein coupled receptor Mth-like 7 (mthl7) (Drosophila melanogaster (Fruit fly)).